Consider the following 396-residue polypeptide: 3-amino-4-hydroxybenzoate 2-monooxygenase PtmB3 (396 aa).

Residues Ala19, 38–39, and Arg112 contribute to the FAD site; that span reads EQ. The active-site Proton acceptor is the Tyr217. Residue Asp295 coordinates FAD. The interval 352-371 is disordered; the sequence is RERGHEFHLPDGPQQRLRDR.

The protein belongs to the 6-hydroxynicotinate 3-monooxygenase family. The cofactor is FAD.

It catalyses the reaction 3-amino-4-hydroxybenzoate + NADPH + O2 + H(+) = 3-amino-2,4-dihydroxybenzoate + NADP(+) + H2O. It participates in antibiotic biosynthesis. Its function is as follows. Part of a gene cluster involved in the biosynthesis of thioplatensimycin (thioPTM) and platensimycin (PTM), potent and selective inhibitors of bacterial and mammalian fatty acid synthases. Catalyzes the hydroxylation of 3-amino-4-hydroxybenzoate (3,4-AHBA) to 3-amino-2,4-dihydroxybenzoate (3,2,4-ADHBA). The sequence is that of 3-amino-4-hydroxybenzoate 2-monooxygenase PtmB3 from Streptomyces platensis.